Here is a 431-residue protein sequence, read N- to C-terminus: Enolase (431 aa).

Q167 lines the (2R)-2-phosphoglycerate pocket. E209 acts as the Proton donor in catalysis. Residues D246, E289, and D316 each contribute to the Mg(2+) site. The (2R)-2-phosphoglycerate site is built by K341, R370, S371, and K392. K341 acts as the Proton acceptor in catalysis.

Belongs to the enolase family. As to quaternary structure, component of the RNA degradosome, a multiprotein complex involved in RNA processing and mRNA degradation. Mg(2+) is required as a cofactor.

The protein resides in the cytoplasm. Its subcellular location is the secreted. It is found in the cell surface. It catalyses the reaction (2R)-2-phosphoglycerate = phosphoenolpyruvate + H2O. Its pathway is carbohydrate degradation; glycolysis; pyruvate from D-glyceraldehyde 3-phosphate: step 4/5. Its function is as follows. Catalyzes the reversible conversion of 2-phosphoglycerate (2-PG) into phosphoenolpyruvate (PEP). It is essential for the degradation of carbohydrates via glycolysis. The chain is Enolase from Shewanella pealeana (strain ATCC 700345 / ANG-SQ1).